A 133-amino-acid polypeptide reads, in one-letter code: Large ribosomal subunit protein bL21 (133 aa).

Positions 1–22 (MAEKPAAKPKAAAAKAEAKDQS) are disordered.

The protein belongs to the bacterial ribosomal protein bL21 family. In terms of assembly, part of the 50S ribosomal subunit. Contacts protein L20.

In terms of biological role, this protein binds to 23S rRNA in the presence of protein L20. This Prochlorococcus marinus (strain MIT 9303) protein is Large ribosomal subunit protein bL21.